A 129-amino-acid chain; its full sequence is Small ribosomal subunit protein uS9 (129 aa).

The disordered stretch occupies residues 107 to 129; the sequence is SRTVERKKYGRRKARRSPQFSKR. Residues 114-129 show a composition bias toward basic residues; that stretch reads KYGRRKARRSPQFSKR.

This sequence belongs to the universal ribosomal protein uS9 family.

The sequence is that of Small ribosomal subunit protein uS9 from Campylobacter jejuni subsp. jejuni serotype O:23/36 (strain 81-176).